The following is a 499-amino-acid chain: Ribulose bisphosphate carboxylase large chain (499 aa).

Substrate-binding residues include N139 and T189. Catalysis depends on K191, which acts as the Proton acceptor. K193 contributes to the substrate binding site. Positions 217, 219, and 220 each coordinate Mg(2+). K217 carries the post-translational modification N6-carboxylysine. H309 acts as the Proton acceptor in catalysis. Residues R310, H342, and S394 each contribute to the substrate site.

The protein belongs to the RuBisCO large chain family. Type I subfamily. In terms of assembly, heterohexadecamer of 8 large chains and 8 small chains. Mg(2+) serves as cofactor.

The catalysed reaction is 2 (2R)-3-phosphoglycerate + 2 H(+) = D-ribulose 1,5-bisphosphate + CO2 + H2O. The enzyme catalyses D-ribulose 1,5-bisphosphate + O2 = 2-phosphoglycolate + (2R)-3-phosphoglycerate + 2 H(+). RuBisCO catalyzes two reactions: the carboxylation of D-ribulose 1,5-bisphosphate, the primary event in carbon dioxide fixation, as well as the oxidative fragmentation of the pentose substrate. Both reactions occur simultaneously and in competition at the same active site. The protein is Ribulose bisphosphate carboxylase large chain of Paraburkholderia xenovorans (strain LB400).